A 444-amino-acid chain; its full sequence is 23S rRNA (uracil(1939)-C(5))-methyltransferase RlmD (444 aa).

In terms of domain architecture, TRAM spans Lys-5–Ser-64. Cys-77, Cys-83, Cys-86, and Cys-166 together coordinate [4Fe-4S] cluster. S-adenosyl-L-methionine-binding residues include Gln-276, Phe-305, Asn-310, Glu-326, Asn-353, and Asp-374. Cys-400 acts as the Nucleophile in catalysis.

Belongs to the class I-like SAM-binding methyltransferase superfamily. RNA M5U methyltransferase family. RlmD subfamily.

It catalyses the reaction uridine(1939) in 23S rRNA + S-adenosyl-L-methionine = 5-methyluridine(1939) in 23S rRNA + S-adenosyl-L-homocysteine + H(+). Catalyzes the formation of 5-methyl-uridine at position 1939 (m5U1939) in 23S rRNA. The protein is 23S rRNA (uracil(1939)-C(5))-methyltransferase RlmD of Legionella pneumophila (strain Paris).